A 317-amino-acid chain; its full sequence is MRSSDGQEAGRPAAILIAGPTASGKSALGLRIARAFGGTVINTDSMQVYADLRVLSARPTADEEAEAPHRLYGSVDGAVNFSVGHFQRQAAVILSEMAPDQLPVFVGGTGLYFRSLEDGISDLPEVPEPIRQQIRAEAEGRPTEALHATLTLRDPKTAQRLRPSDRMRVMRALEIFAATGRSIGSFQETRLPGPLAGRPLLKVFLSPEREILRRRIDARFVTMMENGALDEVAALRDRRLDPLLPVMRAHGVPGLIAHLDGALSREEAVQRGQGDTRRYAKRQFTWFRHQMGEAWHWTTPEAAWSLAEALLSAPVGQ.

ATP is bound at residue 19-26 (GPTASGKS). Substrate is bound at residue 21–26 (TASGKS). Residues 44–47 (DSMQ) form an interaction with substrate tRNA region.

The protein belongs to the IPP transferase family. Monomer. The cofactor is Mg(2+).

The catalysed reaction is adenosine(37) in tRNA + dimethylallyl diphosphate = N(6)-dimethylallyladenosine(37) in tRNA + diphosphate. Functionally, catalyzes the transfer of a dimethylallyl group onto the adenine at position 37 in tRNAs that read codons beginning with uridine, leading to the formation of N6-(dimethylallyl)adenosine (i(6)A). This chain is tRNA dimethylallyltransferase, found in Methylorubrum populi (strain ATCC BAA-705 / NCIMB 13946 / BJ001) (Methylobacterium populi).